The primary structure comprises 308 residues: MKWIEVQVTTTQEAEEAVTNIMHELGAGGVVIKNPNDVKLLAQSDNWDYLDSSLFEEEGNIKVFAYFPIASDTTDKINILKDRIVELKSFGIDIGNFDVKVSEVDEADWENNWKQYYKPLKIGKKIVIKPSWEEYVSQGEEIIIELDPGMAFGTGTHETTKMCLEFLEDIVMPESIVFDVGCGSGILSITSSKLGAKEVYAADIDEVSVEVARQNVELNNLQNVKVFKSDLLGEFRGKADIIVANIIADVIIRLSAEAPKYLKEEGLFLASGIIKSRKKEVMEKIQPFFEILQIKEEGEWCTILSRKK.

Positions 160, 181, 203, and 245 each coordinate S-adenosyl-L-methionine.

It belongs to the methyltransferase superfamily. PrmA family.

It localises to the cytoplasm. The catalysed reaction is L-lysyl-[protein] + 3 S-adenosyl-L-methionine = N(6),N(6),N(6)-trimethyl-L-lysyl-[protein] + 3 S-adenosyl-L-homocysteine + 3 H(+). Its function is as follows. Methylates ribosomal protein L11. This Thermoanaerobacter sp. (strain X514) protein is Ribosomal protein L11 methyltransferase.